The following is a 199-amino-acid chain: Large ribosomal subunit protein mL51 (199 aa).

The N-terminal 15 residues, 1 to 15 (MNSNSLSRFTSIVRT), are a transit peptide targeting the mitochondrion.

It belongs to the mitochondrion-specific ribosomal protein mL51 family. As to quaternary structure, component of the mitochondrial ribosome large subunit (39S) which comprises a 16S rRNA and about 50 distinct proteins.

Its subcellular location is the mitochondrion. The chain is Large ribosomal subunit protein mL51 (mrpl-51) from Caenorhabditis elegans.